The primary structure comprises 436 residues: UPF0597 protein YhaM (436 aa).

Belongs to the UPF0597 family.

This is UPF0597 protein YhaM from Escherichia coli O127:H6 (strain E2348/69 / EPEC).